A 47-amino-acid polypeptide reads, in one-letter code: Wound-induced basic protein (47 aa).

A disordered region spans residues 1–47 (MIYDVNSPLFRSFLSQKGGSSDKRKTEEQKPKEHRPKASENKPIMTE). Residues 20–40 (SSDKRKTEEQKPKEHRPKASE) show a composition bias toward basic and acidic residues.

As to expression, abundant in radicals and epicotyls of seedlings and higher in the roots than in stems and leaves of mature plants.

The polypeptide is Wound-induced basic protein (PR4) (Phaseolus vulgaris (Kidney bean)).